A 1520-amino-acid chain; its full sequence is Glutamate synthase [NADPH] large chain (1520 aa).

The active-site For GATase activity is Cys22. Positions 22–415 (CGIGLYAHLK…PGKMLLIDLE (394 aa)) constitute a Glutamine amidotransferase type-2 domain. The tract at residues 890-913 (GGKSNSGEGGEDPKRFVPDENGDD) is disordered. Positions 900–913 (EDPKRFVPDENGDD) are enriched in basic and acidic residues. An FMN-binding site is contributed by 1060–1112 (LAEAHQTLMLNGLRDRVVLETDGKLMTGRDVVMAALLGAEEFGFATAPLVVLG). The [3Fe-4S] cluster site is built by Cys1113, Cys1119, and Cys1124.

It belongs to the glutamate synthase family. In terms of assembly, aggregate of 4 catalytic active heterodimers, consisting of a large and a small subunit. [3Fe-4S] cluster serves as cofactor. It depends on FAD as a cofactor. Requires FMN as cofactor.

The enzyme catalyses 2 L-glutamate + NADP(+) = L-glutamine + 2-oxoglutarate + NADPH + H(+). Its pathway is amino-acid biosynthesis; L-glutamate biosynthesis via GLT pathway; L-glutamate from 2-oxoglutarate and L-glutamine (NADP(+) route): step 1/1. It participates in energy metabolism; nitrogen metabolism. The chain is Glutamate synthase [NADPH] large chain (gltA) from Bacillus subtilis (strain 168).